Reading from the N-terminus, the 226-residue chain is UPF0319 protein YPO1442/y2728/YP_1333 (226 aa).

An N-terminal signal peptide occupies residues 1–20; the sequence is MKLGLVAGMLAVCFSFSSVA.

It belongs to the UPF0319 family.

The polypeptide is UPF0319 protein YPO1442/y2728/YP_1333 (Yersinia pestis).